The chain runs to 346 residues: Nicotinate-nucleotide--dimethylbenzimidazole phosphoribosyltransferase (346 aa).

Glutamate 313 (proton acceptor) is an active-site residue.

It belongs to the CobT family.

It catalyses the reaction 5,6-dimethylbenzimidazole + nicotinate beta-D-ribonucleotide = alpha-ribazole 5'-phosphate + nicotinate + H(+). Its pathway is nucleoside biosynthesis; alpha-ribazole biosynthesis; alpha-ribazole from 5,6-dimethylbenzimidazole: step 1/2. In terms of biological role, catalyzes the synthesis of alpha-ribazole-5'-phosphate from nicotinate mononucleotide (NAMN) and 5,6-dimethylbenzimidazole (DMB). The polypeptide is Nicotinate-nucleotide--dimethylbenzimidazole phosphoribosyltransferase (Parabacteroides distasonis (strain ATCC 8503 / DSM 20701 / CIP 104284 / JCM 5825 / NCTC 11152)).